A 240-amino-acid chain; its full sequence is Probable transcriptional activator (240 aa).

The essential for the oxygen-regulated activity stretch occupies residues 17–28; that stretch reads CTSCQARHGVVC. Residues 158–232 enclose the HTH crp-type domain; the sequence is RTAEEKVASL…FRHIIVPDMD (75 aa). Residues 191–210 constitute a DNA-binding region (H-T-H motif); the sequence is RAEIADFLGLTIETVSRQMT.

Its function is as follows. Promotes the microaerobic and symbiotic induction of fixN, possibly by binding to the FNR consensus binding site upstream of fixN. This is Probable transcriptional activator (fnrN) from Rhizobium leguminosarum bv. viciae.